The following is a 4017-amino-acid chain: MSAADQEPIAVIGMACRFPGGSNSPSKLWELLKAPHDIAKPIPDDRFDSTGFFHKNGSHHGATDCREAYFLDEDVTRFDNAFFNVQPGEAEALDPQQRFLMETIYDSLCSAGQTIEGLRGSRAAVYVGLMCDDWSQMNGRDWDLVPTYAATGTSRAVVSNRVSYFFDWHGPSMTIDTACSSSLVAVHEGVNALRRGESPIVVAAGANMILSPGMMIAESNLHMLSPTGRSKMWDASADGYARGEGIAAVVLKPLSAALRDGDPINCVIRGTGVNQDGRTPGLTMPNNVAQADLIRDTYERAGLNIQDPKDRPQFFHAHGTGTPAGDPQEAEAISRAFYEGGSVKDPLFVGSIKTVIGHTEGTAGLASLIGTALAMQNNTIPPNLHFNTLSPRVAEFCDNLRIPTKALPWPTPVAGQPRRASVNSFGFGGTNAHAIIESYEAAPTEQRTVSTKVPAFTPLTISAASASALRTTLSDLSAYVLSHPDTDLRDLAYTFQHRRSTLAFRKAIATDNRDALVGTIDALLNEGGAGDGGLTARYFDSPDPKILGVFTGQGAQWPRMGALLLEQSPYVGELLTQLDQALATLPEGDRPDWTLREQILAEAAQSRLSEAAISQPLCTAVQIALVDLLGLAGIRLRGVVGHSSGEIAAAYASGYLSATDAIRVAYYRGLYAKLAGSPAGRGSMLAVGTSFEDAVEFCELEEFEGRIKVAARNSSNSVTLSGDEDAIEEALEIYKDEGRFARQLRVDTAYHSHHMEPCAVPYRDALTRCEIKVGEGNGIPWYSSVIEGHVMAPTDVSPQYWVDNMTSAVLFSPAVAHAVAEGGPFDLGVEVGPHPALKGPCLDTVEEAAGHRIPYTGLLGRNKNDVVELSSALGFIWTQLGAASVDFDRLERAISGNPYPKKVVDDLPTYPFDHSRSFYTLTRFSGAHRNMHAPPNPILGRRCVETETADEVSWRNILKSGEISWLQGHQLQGQTVFPAMGYIAMCVEAAAVLAGPERPLGLVTLEDVIIGRALAFQNESVGMESKVTVKIDHTSDDELRGHIACHSGLPFDSAAPLALNFSATLHVRFHEPRADTLPAVRADEISLVKTDPGRLYSQFTQLGYNYSPPFTGVKAIQRKRGFATGDIEDISGEGWEDQLIVHPGWLDSALQTAFAAYSYPHDNRLWALHVPTEIRTVSINPYFTERGAGGRTRQLQYQSTAREGLGAPVAADIDVFAAGEEDGHAFIQLEAVQVKPFAAATARDDALLFARFDYRLANPDAIAAVEGDDLLPPKTEAVVETIERVGFYYLRRVHETVTPAERRPTLPHFRHLIDLCGRVVPLVAAGEHPHVPREAINDSASYIRSLIARYHDRADIQLLEAVGENLVGEIRRNGIMLEHMMKDGILDRFYEELAGLDVANVWIARMVAQVAHRHPHLRILEIGAGTGGTTRTVLPMLGDAFQSYTFTDISAGFFGSAQERFRTYADRMVFATYNMELTPEEQGFEEGTYDVVLASNVLHATGRLDDMMANTRRLLRPGGYLMMLEFVSNDRTGITACMGGLPGWWGNGIVDPARGDGPCLTPAQWDELVRRHGFSGVDTHCPVEKHLQWYTVHLCQAVDDRVLALRNPLESLESAATLAPPPAELVIVGGTTATVSKLIDEASTLLAPRYNTISRVATLEELDQRGLPLGSSVLSLTELDHQFFEHRTAAKLEALKALWRAGGSIIWATRGVRDASPYSAMILGLARVVRFEYPNINLQILDFDRAPDAATLAADLVRLEMGRHWKEEGANILYSVEPEAHYENGALFIPRMYPDRDANARYNTQRRTVAREVDPRETSVVLEPAGPVGGALELCAPSPLRVAPAARPGAEKTVEVIVEQSVLHAVKVPDAGFFSLCAGTDAETGRPLLALVDSPVESRLRVPVEWTVSLREPLSRTGAFSLGDVASHLVASAILAGAPAFGSLLIHEADESLKEAFGRQAAGHGAHVVFTTADKAKARAGADWVLVHEKLPGRLVQRLLPHDISSFTDLSHSEGSASAQLIVHSLPVYSPITTVKDVIRAQAGAFPDAAPQDVGAALKAAWQAASRKRKGSGNKSQTSAIPVLPLQDVSRAGARHAPLTVVDWNTNSVSVALRPIDAGTIFRSDGTYFLVGLSGEVGQSLCQWMVAHGARHIVLSSRRPKVHPRYIEDLAALGATVRVMALDITNREALRACYDTXXXXXXXXXXXXXXXXXXXXXXXXXXXXXXXXXXXXXXXXXXXXXXXXXXXXXXXXXXXXXXXXXXXXXXXXXXXXXXXXXXXXXXXXXXXXXXXXXXXXXXXXXXXXXXXXXXXXXXXXXXXXXXXXXXXXXXXXXXXXXXXXXXXXXXXXXXXXXXXXXXXXXXXXXXXXXXXXXXXXXXXXXXXXXXXXXXXXXXXXXXXXXXXXXXXXXXXXXXXXXXXXXXAVVQDSLTENLIRILMMPATETVDPMMSLVELGIDSIMAVDLRTWFLKELDVDVPVLKILSPGETVKSLAEEAMAKIPAEIVDLSKLAEGSADVSGAPAPAAVQPVQPAPVPVPVPVTKKAIDQVSEASGVSATTPSTRAETDASSSPALVSTPGTSLERPDQEEDKQLFQPPPRPKPTTLQHRLPRQAYWAGSASTTSPKPSRRAAQRHETLRTRFFWSTDDSRTPMQGILSQTLVRLETATIETEAQASEELEAMRKYEWNLGDWVPLRIKLLTLSETSHYLILGSHHISMDGHSFSVFLLDIHQAYNNPARPLPPMPSTSQARAFGAHQIAAYESGQMRPAIEHYKTTLPAADLARPIELFPFARTKVRPPLDRYGTHVARAHLGPDTTAKLKTLARGRRATSFHAYLGALQALLFRLLPADTTERVYIGIADANRLDSRFAASVGNFLNVLPLRFDRDAATFGQAIETARDKARDALKHSALPFDLLLDEVGVPRSPTLLIRCIVFMNYRLVVKEHADKQWIGCRIGEERWHTARTGYDVALEIVEDHDGATLAMHVQQSLYDADAAELLVRSFANAVKEFAAKGDAMETEKLQKWDKVDVEKALEIGTGPALNLKWPATVAHRIDEVIAQNPTAVALKDGLGNVLTYAQMDARVESIANALNVRLPNNADGKAPVVGVFQAPSADWICSLVAIHRVGAVYLPLDLRNSIPRLKSNVAVARPAALLVDAETASRVGELEIKDAVPAIDVSRLAADTKGKKPTNTAAARADQPAYIIFTSGSTGEPKGIVVTHAGLRNNLEGYHNAWNIPSLAGVVLQQVSFGFDALSASDLCLRXXXXXXXXXXLMVDHGVTMTQATPSEYEMWLRFAPDQLRRCTSWKAAWFGGERAAPGLVRSFRDLCVALPNLNVYTSYGPTESTISAMKGVADVRNDPTLTVPVPGRLLPNYTAYLVDDEMRPLPIGVPGEILLGGAGVGKNEYLGRPDLTTQAFLSSPFPVPGDGGKPARLYRTGDYGRLDKSGFLAIEGRIAGDTQVKLRGFRIELAEIERVMLRESDGQLAQVVVTARGVDDGEAEGFLAAHVVLESQSTDAAATAQVINRLRSRLPLSLPQYMCPAIIVPLAKLPLTSNDKVDRRAVQALSLPKTTTASTTADGTQPAQPLTPTESRLATLWAGVLPQRGGGVLQPRSDFFTAGGNSLLLVKLQAAIKREFGDAPRLSKLMSATELGSMAALLDQAGATALDWERETALDLPQGVTAPAKARENGAGLRVLVTGASGSLGKRIVRRLVGDNRVATVVCLVRPTEGRDPSTLFFAAGQADNAKIRTILADLPTIPTTHPDLDPAIIDAVIHCAADRSFWDGYSAVSLSTSTRSRPRCSLLTAGAHLHALSSGALGAFEDPNTYNTKSTLPRPSPTDGYLASKWVAERYLARAVREAGLRATAHRPSGAVPASEREGKEVLAAMAGDMLRLSASLGVRPDYARLSGSFDVGRLEDVAAAVVGEVTGGLGGQGGEEGMGVVEYPGMASVQIRELAEYAEMLLKNGGAEAEAVKGLPMVPALHWVGLAKRAGLFEWLLTAQHLVVDDEEGRKIVSRR.

The 433-residue stretch at 6-438 (QEPIAVIGMA…GTNAHAIIES (433 aa)) folds into the Ketosynthase family 3 (KS3) domain. Residues cysteine 179, histidine 318, and histidine 358 each act as for beta-ketoacyl synthase activity in the active site. Residues 549–869 (VFTGQGAQWP…GRNKNDVVEL (321 aa)) are malonyl-CoA:ACP transacylase (MAT) domain. The N-terminal hotdog fold stretch occupies residues 936-1072 (NPILGRRCVE…ATLHVRFHEP (137 aa)). The PKS/mFAS DH domain maps to 936-1243 (NPILGRRCVE…VKPFAAATAR (308 aa)). The segment at 937 to 1240 (PILGRRCVET…AVQVKPFAAA (304 aa)) is dehydratase (DH) domain. The active-site Proton acceptor; for dehydratase activity is histidine 969. The segment at 1087–1243 (LVKTDPGRLY…VKPFAAATAR (157 aa)) is C-terminal hotdog fold. The active-site Proton donor; for dehydratase activity is the aspartate 1147. Residues 1398 to 1585 (VANVWIARMV…GVDTHCPVEK (188 aa)) are methyltransferase (MT) domain. The interval 2127–2300 (TYFLVGLSGE…XXXXXXXXXX (174 aa)) is ketoreductase (KR)domain. One can recognise a Carrier 1 domain in the interval 2423 to 2499 (AVVQDSLTEN…SLAEEAMAKI (77 aa)). At serine 2458 the chain carries O-(pantetheine 4'-phosphoryl)serine. Disordered regions lie at residues 2547–2606 (VSEA…LQHR) and 2613–2632 (WAGS…AQRH). Positions 2548-2578 (SEASGVSATTPSTRAETDASSSPALVSTPGT) are enriched in polar residues. The interval 2626–3020 (RRAAQRHETL…GDAMETEKLQ (395 aa)) is condensation. The tract at residues 3053–3453 (EVIAQNPTAV…SGFLAIEGRI (401 aa)) is adenylation. The segment at 3567–3586 (PKTTTASTTADGTQPAQPLT) is disordered. The span at 3569 to 3579 (TTTASTTADGT) shows a compositional bias: low complexity. The Carrier 2 domain occupies 3583 to 3661 (QPLTPTESRL…SMAALLDQAG (79 aa)). The interval 3588-3658 (TESRLATLWA…ELGSMAALLD (71 aa)) is thiolation. Position 3621 is an O-(pantetheine 4'-phosphoryl)serine (serine 3621). The segment at 3696–3920 (VTGASGSLGK…DVGRLEDVAA (225 aa)) is reductase-like.

This sequence in the C-terminal section; belongs to the NRP synthetase family.

It carries out the reaction (2S,4S)-4-hydroxy-4-methylglutamate + 8 malonyl-CoA + 3 S-adenosyl-L-methionine + ATP + 8 NADPH + 11 H(+) = (2S)-3-[(2S)-3,5-dioxo-4-[(2E,4R,6R,8E,10E,12E)-4,6,12-trimethyltetradeca-2,8,10,12-tetraenoyl]pyrrolidin-2-yl]-2-hydroxy-2-methylpropanoate + AMP + 3 S-adenosyl-L-homocysteine + 8 CO2 + diphosphate + 8 NADP(+) + 8 CoA + 6 H2O. It participates in secondary metabolite biosynthesis. Its function is as follows. Hybrid PKS-NRPS synthetase; part of the gene cluster that mediates the biosynthesis of the tetramic acid Sch210972, a potential anti-HIV fungal natural product that contains a decalin core. The PKS module of cghG together with the enoylreductase cghC catalyze the formation of the polyketide unit which is then conjugated to 4-hydroxyl-4-methyl glutamate (HMG) by the condensation domain of the cghG NRPS module. One unique structural feature of Sch210972 is the tetramic acid motif proposed to be derived from the non-proteinogenic amino acid HMG, by a Dieckmann-type condensation catalyzed by the reductase domain of cghG. The aldolase cghB catalyzes the aldol condensation of 2 molecules of pyruvic acid to yield the intermediate 4-hydroxyl-4-methyl-2-oxoglutarate (HMOG), which can then be stereoselectively transaminated by an unidentified enzyme to form HMG. The Diels-Alderase cghA then uses the Dieckmann product released by cghG as substrate and catalyzes the Diels-Alder cycloaddition to form the decalin ring of Sch210972. CghA also suppresses the nonenzymatic formation of the alternative stereoisomer. This Chaetomium globosum (strain ATCC 6205 / CBS 148.51 / DSM 1962 / NBRC 6347 / NRRL 1970) (Soil fungus) protein is Hybrid PKS-NRPS synthetase cghG.